The sequence spans 231 residues: Two-component response regulator ORR1 (231 aa).

Residues 9–135 (RVLLVDDSPV…DVQRLRKCSP (127 aa)) enclose the Response regulatory domain. Aspartate 68 bears the 4-aspartylphosphate mark.

The protein belongs to the ARR family. Type-A subfamily. In terms of processing, two-component system major event consists of a His-to-Asp phosphorelay between a sensor histidine kinase (HK) and a response regulator (RR). In plants, the His-to-Asp phosphorelay involves an additional intermediate named Histidine-containing phosphotransfer protein (HPt). This multistep phosphorelay consists of a His-Asp-His-Asp sequential transfer of a phosphate group between first a His and an Asp of the HK protein, followed by the transfer to a conserved His of the HPt protein and finally the transfer to an Asp in the receiver domain of the RR protein. As to expression, expressed in mature leaves and flowers, and at low levels in roots and shoots.

Functions as a response regulator involved in His-to-Asp phosphorelay signal transduction system. Phosphorylation of the Asp residue in the receiver domain activates the ability of the protein to promote the transcription of target genes. Type-A response regulators seem to act as negative regulators of the cytokinin signaling. The sequence is that of Two-component response regulator ORR1 from Oryza sativa subsp. indica (Rice).